A 140-amino-acid chain; its full sequence is Small ribosomal subunit protein uS12 (140 aa).

Residues 1–44 form a disordered region; the sequence is MPTFNQLVRKGRKTMEKNSQAPALQKGFNSLRKKTTDASAPQKR. Position 102 is a 3-methylthioaspartic acid (Asp-102). Residues 120–140 form a disordered region; that stretch reads VAKRRQARSKYGAKRPKEAKK. The span at 121–140 shows a compositional bias: basic residues; it reads AKRRQARSKYGAKRPKEAKK.

Belongs to the universal ribosomal protein uS12 family. Part of the 30S ribosomal subunit. Contacts proteins S8 and S17. May interact with IF1 in the 30S initiation complex.

Its function is as follows. With S4 and S5 plays an important role in translational accuracy. Interacts with and stabilizes bases of the 16S rRNA that are involved in tRNA selection in the A site and with the mRNA backbone. Located at the interface of the 30S and 50S subunits, it traverses the body of the 30S subunit contacting proteins on the other side and probably holding the rRNA structure together. The combined cluster of proteins S8, S12 and S17 appears to hold together the shoulder and platform of the 30S subunit. This Lachnoclostridium phytofermentans (strain ATCC 700394 / DSM 18823 / ISDg) (Clostridium phytofermentans) protein is Small ribosomal subunit protein uS12.